A 118-amino-acid polypeptide reads, in one-letter code: Large ribosomal subunit protein bL19 (118 aa).

The protein belongs to the bacterial ribosomal protein bL19 family.

Functionally, this protein is located at the 30S-50S ribosomal subunit interface and may play a role in the structure and function of the aminoacyl-tRNA binding site. The sequence is that of Large ribosomal subunit protein bL19 (rplS) from Serratia marcescens.